The primary structure comprises 387 residues: UDP-Gal:alpha-D-GlcNAc-diphosphoundecaprenol alpha-1,3-galactosyltransferase (387 aa).

The protein belongs to the glycosyltransferase group 1 family. Glycosyltransferase 4 subfamily. Requires Mg(2+) as cofactor. Mn(2+) serves as cofactor. The cofactor is Fe(2+).

The enzyme catalyses N-acetyl-alpha-D-glucosaminyl-di-trans,octa-cis-undecaprenyl diphosphate + UDP-alpha-D-galactose = alpha-D-Gal-(1-&gt;3)-alpha-D-GlcNAc-di-trans,octa-cis-undecaprenyl diphosphate + UDP + H(+). Its pathway is bacterial outer membrane biogenesis; LPS O-antigen biosynthesis. Functionally, involved in the biosynthesis of the lipopolysaccharide (LPS) O-antigen region. Catalyzes the transfer of galactose from UDP-galactose to GlcNAc-undecaprenyl diphosphate via an alpha1,3-linkage. Has strict substrate specificity. This Escherichia coli protein is UDP-Gal:alpha-D-GlcNAc-diphosphoundecaprenol alpha-1,3-galactosyltransferase.